A 151-amino-acid chain; its full sequence is Large ribosomal subunit protein uL22 (151 aa).

Positions 1–25 (MARINYSVKEDPETTSKAMGSELHI) are disordered.

It belongs to the universal ribosomal protein uL22 family. In terms of assembly, part of the 50S ribosomal subunit.

This protein binds specifically to 23S rRNA. It makes multiple contacts with different domains of the 23S rRNA in the assembled 50S subunit and ribosome. Functionally, the globular domain of the protein is located near the polypeptide exit tunnel on the outside of the subunit, while an extended beta-hairpin is found that lines the wall of the exit tunnel in the center of the 70S ribosome. The sequence is that of Large ribosomal subunit protein uL22 from Methanosarcina barkeri (strain Fusaro / DSM 804).